Consider the following 160-residue polypeptide: SsrA-binding protein (160 aa).

The protein belongs to the SmpB family.

It is found in the cytoplasm. Functionally, required for rescue of stalled ribosomes mediated by trans-translation. Binds to transfer-messenger RNA (tmRNA), required for stable association of tmRNA with ribosomes. tmRNA and SmpB together mimic tRNA shape, replacing the anticodon stem-loop with SmpB. tmRNA is encoded by the ssrA gene; the 2 termini fold to resemble tRNA(Ala) and it encodes a 'tag peptide', a short internal open reading frame. During trans-translation Ala-aminoacylated tmRNA acts like a tRNA, entering the A-site of stalled ribosomes, displacing the stalled mRNA. The ribosome then switches to translate the ORF on the tmRNA; the nascent peptide is terminated with the 'tag peptide' encoded by the tmRNA and targeted for degradation. The ribosome is freed to recommence translation, which seems to be the essential function of trans-translation. In Salmonella agona (strain SL483), this protein is SsrA-binding protein.